The following is a 471-amino-acid chain: Trigger factor (471 aa).

The region spanning 174-261 (GDVAVVSFEG…VKDLKTRELP (88 aa)) is the PPIase FKBP-type domain. Over residues 436-446 (ETLPKTKSLNG) the composition is skewed to polar residues. A disordered region spans residues 436-471 (ETLPKTKSLNGKPSTQGKTSQSKSKKTKTKVEKTTK). Low complexity predominate over residues 447-457 (KPSTQGKTSQS).

This sequence belongs to the FKBP-type PPIase family. Tig subfamily.

Its subcellular location is the cytoplasm. The enzyme catalyses [protein]-peptidylproline (omega=180) = [protein]-peptidylproline (omega=0). Involved in protein export. Acts as a chaperone by maintaining the newly synthesized protein in an open conformation. Functions as a peptidyl-prolyl cis-trans isomerase. This chain is Trigger factor, found in Prochlorococcus marinus (strain MIT 9211).